Consider the following 100-residue polypeptide: Aspartyl/glutamyl-tRNA(Asn/Gln) amidotransferase subunit C (100 aa).

This sequence belongs to the GatC family. In terms of assembly, heterotrimer of A, B and C subunits.

It catalyses the reaction L-glutamyl-tRNA(Gln) + L-glutamine + ATP + H2O = L-glutaminyl-tRNA(Gln) + L-glutamate + ADP + phosphate + H(+). The catalysed reaction is L-aspartyl-tRNA(Asn) + L-glutamine + ATP + H2O = L-asparaginyl-tRNA(Asn) + L-glutamate + ADP + phosphate + 2 H(+). Its function is as follows. Allows the formation of correctly charged Asn-tRNA(Asn) or Gln-tRNA(Gln) through the transamidation of misacylated Asp-tRNA(Asn) or Glu-tRNA(Gln) in organisms which lack either or both of asparaginyl-tRNA or glutaminyl-tRNA synthetases. The reaction takes place in the presence of glutamine and ATP through an activated phospho-Asp-tRNA(Asn) or phospho-Glu-tRNA(Gln). In Rickettsia bellii (strain OSU 85-389), this protein is Aspartyl/glutamyl-tRNA(Asn/Gln) amidotransferase subunit C.